The primary structure comprises 394 residues: Probable cytosolic iron-sulfur protein assembly protein 1 (394 aa).

WD repeat units lie at residues 10 to 49 (AHNDKAWCAKSHPTLPLLATASTDRTSHIYNLSAKKNFPL), 56 to 108 (AHKR…EQDS), 144 to 184 (GHEN…EEFE), 191 to 230 (DHQHDVKHITWHPSQNLLASSSYDDTIKLYKQDEDDDDWS), 237 to 284 (GHGG…TEQI), 313 to 352 (IHKYAVYSVSWSAKTGKISSTGSDGKLVIYRETESKKWEI), and 359 to 394 (AHGVYEINSVSWCTLDDKTEVLVTAGDDGAINIWEP).

The protein belongs to the WD repeat CIA1 family. Interacts with NAR1.

The protein resides in the cytoplasm. Its subcellular location is the nucleus. Functionally, essential component of the cytosolic iron-sulfur (Fe/S) protein assembly machinery. Required for the maturation of extramitochondrial Fe/S proteins. This Debaryomyces hansenii (strain ATCC 36239 / CBS 767 / BCRC 21394 / JCM 1990 / NBRC 0083 / IGC 2968) (Yeast) protein is Probable cytosolic iron-sulfur protein assembly protein 1.